The primary structure comprises 676 residues: Nicastrin (676 aa).

Positions 1 to 28 (MAMGLIRLLSIAFTLVLLSILPLHLSLA) are cleaved as a signal peptide. Residues 29 to 644 (DEITSIESVP…VYTVQHSAYD (616 aa)) lie on the Extracellular side of the membrane. N-linked (GlcNAc...) asparagine glycosylation is found at N58, N336, N371, N444, N480, N555, and N611. Residues 645-665 (NAVLVAGITVTTLAYIGILAA) traverse the membrane as a helical segment. Topologically, residues 666–676 (KSIITKALKQD) are cytoplasmic.

It belongs to the nicastrin family. In terms of assembly, probable component of the gamma-secretase complex, a complex composed of a presenilin homodimer, nicastrin, APH1 and PEN2.

Its subcellular location is the membrane. In terms of biological role, probable subunit of the gamma-secretase complex, an endoprotease complex that catalyzes the intramembrane cleavage of integral membrane proteins such as Notch. This is Nicastrin from Arabidopsis thaliana (Mouse-ear cress).